A 157-amino-acid polypeptide reads, in one-letter code: MELQLRDHTEGKLQPSQERLAEKALAQAAERLDVPEQAEMSLTFVLNPEIRELNRDYRGIDRATDVISFAIEDDDDLANLPAEIRAELPVELGDLVISIDKVTEQALFLNHSADRELGYLLVHGFLHLNGYDHEEPADEEKMFTLQEEILDGLGLSR.

Zn(2+) is bound by residues histidine 123, histidine 127, and histidine 133.

Belongs to the endoribonuclease YbeY family. Requires Zn(2+) as cofactor.

The protein localises to the cytoplasm. In terms of biological role, single strand-specific metallo-endoribonuclease involved in late-stage 70S ribosome quality control and in maturation of the 3' terminus of the 16S rRNA. In Limosilactobacillus fermentum (strain NBRC 3956 / LMG 18251) (Lactobacillus fermentum), this protein is Endoribonuclease YbeY.